We begin with the raw amino-acid sequence, 643 residues long: Threonine--tRNA ligase (643 aa).

The region spanning Met1–Thr61 is the TGS domain. A catalytic region spans residues Asp243 to Pro534. Zn(2+) contacts are provided by Cys334, His385, and His511.

This sequence belongs to the class-II aminoacyl-tRNA synthetase family. Homodimer. The cofactor is Zn(2+).

It is found in the cytoplasm. It catalyses the reaction tRNA(Thr) + L-threonine + ATP = L-threonyl-tRNA(Thr) + AMP + diphosphate + H(+). Functionally, catalyzes the attachment of threonine to tRNA(Thr) in a two-step reaction: L-threonine is first activated by ATP to form Thr-AMP and then transferred to the acceptor end of tRNA(Thr). Also edits incorrectly charged L-seryl-tRNA(Thr). This is Threonine--tRNA ligase from Actinobacillus pleuropneumoniae serotype 7 (strain AP76).